A 485-amino-acid chain; its full sequence is E3 ubiquitin-protein ligase TRIM68 (485 aa).

An RING-type zinc finger spans residues 16 to 61 (CPICMTFLREPMSIDCGHSFCHSCLSGLWEIPGESQNWGYTCPLCR). The B box-type zinc finger occupies 93–134 (LKGDLCERHGEKLKMFCKEDVLIMCEACSQSPEHEAHSVVPM). Zn(2+) is bound by residues Cys98, His101, Cys120, and His126. Residues 207-239 (AEVAAALASLQREAAETMQKLELNHSELIQQSQ) are a coiled coil. The B30.2/SPRY domain maps to 285-481 (LKTDCRVLGL…NTAPLAICSL (197 aa)).

Belongs to the TRIM/RBCC family. In terms of assembly, interacts with AR/androgen receptor (via ligand-binding domain). Interacts with KAT5/TIP60. Post-translationally, auto-ubiquitinated. In terms of tissue distribution, widely expressed. Expressed at high levels in prostate cancer cell lines. Up-regulation could be restricted to androgen-dependent cells.

It localises to the cytoplasm. The protein resides in the perinuclear region. Its subcellular location is the nucleus. It catalyses the reaction S-ubiquitinyl-[E2 ubiquitin-conjugating enzyme]-L-cysteine + [acceptor protein]-L-lysine = [E2 ubiquitin-conjugating enzyme]-L-cysteine + N(6)-ubiquitinyl-[acceptor protein]-L-lysine.. It participates in protein modification; protein ubiquitination. Functions as a ubiquitin E3 ligase. Acts as a coactivator of androgen receptor (AR) depending on its ubiquitin ligase activity. In Homo sapiens (Human), this protein is E3 ubiquitin-protein ligase TRIM68 (TRIM68).